The primary structure comprises 269 residues: Diphthine synthase (269 aa).

S-adenosyl-L-methionine contacts are provided by residues leucine 10, aspartate 87, valine 90, 115 to 116 (SI), leucine 166, alanine 209, and histidine 234.

This sequence belongs to the diphthine synthase family. In terms of assembly, homodimer.

It carries out the reaction 2-[(3S)-amino-3-carboxypropyl]-L-histidyl-[translation elongation factor 2] + 3 S-adenosyl-L-methionine = diphthine-[translation elongation factor 2] + 3 S-adenosyl-L-homocysteine + 3 H(+). Its pathway is protein modification; peptidyl-diphthamide biosynthesis. Its function is as follows. S-adenosyl-L-methionine-dependent methyltransferase that catalyzes the trimethylation of the amino group of the modified target histidine residue in translation elongation factor 2 (EF-2), to form an intermediate called diphthine. The three successive methylation reactions represent the second step of diphthamide biosynthesis. The protein is Diphthine synthase of Pyrococcus furiosus (strain ATCC 43587 / DSM 3638 / JCM 8422 / Vc1).